The chain runs to 177 residues: Large ribosomal subunit protein uL6 (177 aa).

Belongs to the universal ribosomal protein uL6 family. As to quaternary structure, part of the 50S ribosomal subunit.

Its function is as follows. This protein binds to the 23S rRNA, and is important in its secondary structure. It is located near the subunit interface in the base of the L7/L12 stalk, and near the tRNA binding site of the peptidyltransferase center. This is Large ribosomal subunit protein uL6 from Paracoccus denitrificans (strain Pd 1222).